A 69-amino-acid chain; its full sequence is Conotoxin Fr3.1 (69 aa).

The N-terminal stretch at 1 to 20 is a signal peptide; it reads MLKTGVLLLIFLVLFPLATL. Residues 21 to 51 constitute a propeptide that is removed on maturation; that stretch reads QDADQPVERNVENKQDLNLDKRRGMKLLAQR. Glutamine 52 carries the post-translational modification Pyrrolidone carboxylic acid. 4-carboxyglutamate is present on glutamate 54. A 4-hydroxyproline modification is found at proline 58.

Belongs to the conotoxin M superfamily. In terms of tissue distribution, expressed by the venom duct.

The protein resides in the secreted. Functionally, probable toxin. The protein is Conotoxin Fr3.1 of Conus frigidus (Frigid cone).